A 499-amino-acid polypeptide reads, in one-letter code: Putative protease Do-like 12, mitochondrial (499 aa).

The N-terminal 24 residues, 1-24 (MLFRSCVGMVSRYSRALLPTITIS), are a transit peptide targeting the mitochondrion. The tract at residues 94–259 (GGSGFAIAGK…IPTPIIRHFI (166 aa)) is serine protease. Residues H110, D144, and S222 each act as charge relay system in the active site. The 85-residue stretch at 272–356 (GSLVLSCQSM…DENILVKVLR (85 aa)) folds into the PDZ domain.

Belongs to the peptidase S1C family.

Its subcellular location is the mitochondrion matrix. Functionally, putative serine protease. This chain is Putative protease Do-like 12, mitochondrial (DEGP12), found in Arabidopsis thaliana (Mouse-ear cress).